Consider the following 349-residue polypeptide: UDP-N-acetylenolpyruvoylglucosamine reductase (349 aa).

The 173-residue stretch at 25–197 (GIAARARFAA…VAVTFRLPKQ (173 aa)) folds into the FAD-binding PCMH-type domain. Residue Arg-173 is part of the active site. Ser-249 serves as the catalytic Proton donor. Glu-345 is an active-site residue.

Belongs to the MurB family. The cofactor is FAD.

The protein resides in the cytoplasm. It carries out the reaction UDP-N-acetyl-alpha-D-muramate + NADP(+) = UDP-N-acetyl-3-O-(1-carboxyvinyl)-alpha-D-glucosamine + NADPH + H(+). It participates in cell wall biogenesis; peptidoglycan biosynthesis. Functionally, cell wall formation. The polypeptide is UDP-N-acetylenolpyruvoylglucosamine reductase (Burkholderia orbicola (strain MC0-3)).